The chain runs to 391 residues: ATPase GET3C (391 aa).

Residues 1-50 constitute a mitochondrion transit peptide; that stretch reads MAALLLLNRVSRSTSSISLHRVAGTLGFNSFNAQIHGDRISGTLFRVRSL. Position 77-84 (77-84) interacts with ATP; that stretch reads KGGVGKTS. Asp106 is a catalytic residue. Asn328 contacts ATP.

The protein belongs to the arsA ATPase family.

Its subcellular location is the mitochondrion matrix. The enzyme catalyses ATP + H2O = ADP + phosphate + H(+). The chain is ATPase GET3C from Arabidopsis thaliana (Mouse-ear cress).